A 1375-amino-acid chain; its full sequence is DNA-directed RNA polymerase subunit beta (1375 aa).

This sequence belongs to the RNA polymerase beta chain family. The RNAP catalytic core consists of 2 alpha, 1 beta, 1 beta' and 1 omega subunit. When a sigma factor is associated with the core the holoenzyme is formed, which can initiate transcription.

It carries out the reaction RNA(n) + a ribonucleoside 5'-triphosphate = RNA(n+1) + diphosphate. DNA-dependent RNA polymerase catalyzes the transcription of DNA into RNA using the four ribonucleoside triphosphates as substrates. The polypeptide is DNA-directed RNA polymerase subunit beta (Coxiella burnetii (strain Dugway 5J108-111)).